Consider the following 631-residue polypeptide: Glycosyltransferase-like protein LARGE (631 aa).

The Cytoplasmic segment spans residues 1–6 (MQSNYS). A helical; Signal-anchor for type II membrane protein membrane pass occupies residues 7–27 (ISYFLLILFTGTSSYFTIWNF). Topologically, residues 28 to 631 (VDHTRVGAFP…TASRLGIKLR (604 aa)) are lumenal. Residues N95, N105, N167, N177, N287, N400, N485, N502, N521, N529, and N593 are each glycosylated (N-linked (GlcNAc...) asparagine).

This sequence belongs to the glycosyltransferase 8 family.

It is found in the golgi apparatus membrane. Its function is as follows. Probable glycosyltransferase. In Caenorhabditis elegans, this protein is Glycosyltransferase-like protein LARGE (lge-1).